Here is a 116-residue protein sequence, read N- to C-terminus: Large ribosomal subunit protein uL18 (116 aa).

Belongs to the universal ribosomal protein uL18 family. As to quaternary structure, part of the 50S ribosomal subunit; part of the 5S rRNA/L5/L18/L25 subcomplex. Contacts the 5S and 23S rRNAs.

This is one of the proteins that bind and probably mediate the attachment of the 5S RNA into the large ribosomal subunit, where it forms part of the central protuberance. The sequence is that of Large ribosomal subunit protein uL18 from Shewanella oneidensis (strain ATCC 700550 / JCM 31522 / CIP 106686 / LMG 19005 / NCIMB 14063 / MR-1).